Here is a 1722-residue protein sequence, read N- to C-terminus: Lymphocyte antigen 75 (1722 aa).

The signal sequence occupies residues 1–27 (MGTRRVTPGCAAGLLVLLLRCFGLAEP). Topologically, residues 28-1666 (SEFSGDDSFT…VVCKVPLSPD (1639 aa)) are extracellular. The 151-residue stretch at 32–182 (GDDSFTIVNE…FLVGETWHHD (151 aa)) folds into the Ricin B-type lectin domain. The N-linked (GlcNAc...) asparagine glycan is linked to N135. A Fibronectin type-II domain is found at 164-211 (SYGRPCEFPFLVGETWHHDCIRDENHSGPWCATTLNYEYDQKWGICLK). Disulfide bonds link C169-C194, C183-C209, C247-C340, and C317-C332. Residues 225–341 (QIGSCYQFNN…CEAQQPYVCK (117 aa)) form the C-type lectin 1 domain. 2 N-linked (GlcNAc...) asparagine glycosylation sites follow: N345 and N377. C-type lectin domains follow at residues 368–486 (QNGF…YVCK), 493–625 (NDTR…ICKK), and 652–791 (SNLS…WVCQ). Disulfide bonds link C389–C485 and C462–C477. N529 carries N-linked (GlcNAc...) asparagine glycosylation. Cystine bridges form between C597–C614, C678–C790, and C752–C782. Residues N843 and N865 are each glycosylated (N-linked (GlcNAc...) asparagine). Y933 bears the Phosphotyrosine mark. N-linked (GlcNAc...) asparagine glycosylation is found at N934 and N1076. C-type lectin domains are found at residues 958–1091 (FQNK…LCQK) and 1110–1222 (YLNN…ICYY). Disulfide bonds link C1060–C1080 and C1197–C1211. N-linked (GlcNAc...) asparagine glycosylation is found at N1225, N1320, and N1392. The C-type lectin 7 domain occupies 1251-1374 (FQNSCYNFMI…VIDETLHFYQ (124 aa)). C-type lectin domains lie at 1401–1513 (YEDG…ICYK) and 1542–1661 (YGDH…VCKV). Cysteines 1488 and 1502 form a disulfide. N-linked (GlcNAc...) asparagine glycosylation is found at N1593 and N1626. A disulfide bridge links C1635 with C1650. The helical transmembrane segment at 1667-1691 (YRGIAVLFAVLSVLALISGLIWFLV) threads the bilayer. At 1692-1722 (QRNHFRWTGLSSVRYEHGANEDEVMLPSFHD) the chain is on the cytoplasmic side. Residues S1703 and S1719 each carry the phosphoserine modification.

Expressed in the thymus and cultured bone marrow cells.

The protein localises to the membrane. In terms of biological role, acts as an endocytic receptor to direct captured antigens from the extracellular space to a specialized antigen-processing compartment. Causes reduced proliferation of B lymphocytes. This chain is Lymphocyte antigen 75 (LY75), found in Mesocricetus auratus (Golden hamster).